Reading from the N-terminus, the 285-residue chain is Inositol polyphosphate 1-phosphatase (285 aa).

Positions 68, 106, 108, and 109 each coordinate Mg(2+). 1D-myo-inositol 1,4-bisphosphate is bound by residues aspartate 109, glycine 110, threonine 111, serine 173, glycine 195, serine 197, and lysine 200. Residue aspartate 223 participates in Mg(2+) binding.

The protein belongs to the inositol monophosphatase superfamily. Monomer. Mg(2+) is required as a cofactor.

It is found in the cytoplasm. It catalyses the reaction 1D-myo-inositol 1,4-bisphosphate + H2O = 1D-myo-inositol 4-phosphate + phosphate. It carries out the reaction adenosine 3',5'-bisphosphate + H2O = AMP + phosphate. Its activity is regulated as follows. Partially inhibited by Li(2+). In terms of biological role, catalyzes the hydrolysis of the 1-position phosphate from inositol 1,4-bisphosphate. Is also able to convert 3'(2')-phosphoadenosine 5'-phosphate (PAP) to AMP but with less efficiency. The protein is Inositol polyphosphate 1-phosphatase of Entamoeba histolytica (strain ATCC 30459 / HM-1:IMSS / ABRM).